The following is a 75-amino-acid chain: Small ribosomal subunit protein bS18c (75 aa).

The protein belongs to the bacterial ribosomal protein bS18 family. Part of the 30S ribosomal subunit.

It localises to the plastid. It is found in the chloroplast. The chain is Small ribosomal subunit protein bS18c from Psilotum nudum (Whisk fern).